A 492-amino-acid chain; its full sequence is Catalase isozyme 3 (492 aa).

Residues H65 and N138 contribute to the active site. Residue Y348 coordinates heme.

Belongs to the catalase family. Homotetramer. Requires heme as cofactor.

It is found in the peroxisome. The enzyme catalyses 2 H2O2 = O2 + 2 H2O. Occurs in almost all aerobically respiring organisms and serves to protect cells from the toxic effects of hydrogen peroxide. This Nicotiana plumbaginifolia (Leadwort-leaved tobacco) protein is Catalase isozyme 3 (CAT3).